A 314-amino-acid chain; its full sequence is Lipoyl synthase (314 aa).

Positions 55, 60, 66, 81, 85, 88, and 292 each coordinate [4Fe-4S] cluster. The Radical SAM core domain occupies 67 to 281 (WEDREATFLI…SAYAEGLGFA (215 aa)).

This sequence belongs to the radical SAM superfamily. Lipoyl synthase family. [4Fe-4S] cluster is required as a cofactor.

The protein localises to the cytoplasm. It carries out the reaction [[Fe-S] cluster scaffold protein carrying a second [4Fe-4S](2+) cluster] + N(6)-octanoyl-L-lysyl-[protein] + 2 oxidized [2Fe-2S]-[ferredoxin] + 2 S-adenosyl-L-methionine + 4 H(+) = [[Fe-S] cluster scaffold protein] + N(6)-[(R)-dihydrolipoyl]-L-lysyl-[protein] + 4 Fe(3+) + 2 hydrogen sulfide + 2 5'-deoxyadenosine + 2 L-methionine + 2 reduced [2Fe-2S]-[ferredoxin]. It functions in the pathway protein modification; protein lipoylation via endogenous pathway; protein N(6)-(lipoyl)lysine from octanoyl-[acyl-carrier-protein]: step 2/2. In terms of biological role, catalyzes the radical-mediated insertion of two sulfur atoms into the C-6 and C-8 positions of the octanoyl moiety bound to the lipoyl domains of lipoate-dependent enzymes, thereby converting the octanoylated domains into lipoylated derivatives. The chain is Lipoyl synthase from Mycolicibacterium smegmatis (strain ATCC 700084 / mc(2)155) (Mycobacterium smegmatis).